Here is a 559-residue protein sequence, read N- to C-terminus: Cation/calcium exchanger 2 (559 aa).

A run of 13 helical transmembrane segments spans residues 10–30 (FGYLTVTFLLVISCLLLGFFT), 86–106 (GFPILGQFLLFLWLLLLFYLL), 131–151 (VAGVTLLSLGNGAPDLFASLV), 167–187 (TVVGGSGFVTCVVVGIISISL), 203–223 (ICFFCAAIGSLALILVYGKIN), 224–244 (FWGALGFCSLYAVYVAFVVLS), 331–351 (WSKPLAVASVTFAPVLLSFLW), 362–382 (AGVVYLIGCLIGIALGFIAGA), 393–413 (WLLPWLAGGFVMSMTWSYISA), 416–436 (LVALLTSLGYIFGVSPSILGL), 480–500 (FALGISLVGCAWEAYPLSIVI), 506–526 (LLESLGFLVAGLVWSFLVLFS), and 531–551 (LGGVMGIGLLVIYLASLSLRI).

The protein belongs to the Ca(2+):cation antiporter (CaCA) (TC 2.A.19) family. Cation/calcium exchanger (CCX) subfamily.

It is found in the membrane. Its function is as follows. Membrane-localized H(+)-dependent K(+) and Na(+) transporter. In Arabidopsis thaliana (Mouse-ear cress), this protein is Cation/calcium exchanger 2 (CCX2).